A 187-amino-acid chain; its full sequence is NADH-quinone oxidoreductase subunit B (187 aa).

Residues Cys66, Cys67, Cys131, and Cys161 each coordinate [4Fe-4S] cluster.

The protein belongs to the complex I 20 kDa subunit family. In terms of assembly, NDH-1 is composed of 14 different subunits. Subunits NuoB, C, D, E, F, and G constitute the peripheral sector of the complex. [4Fe-4S] cluster serves as cofactor.

The protein resides in the cell inner membrane. It carries out the reaction a quinone + NADH + 5 H(+)(in) = a quinol + NAD(+) + 4 H(+)(out). Functionally, NDH-1 shuttles electrons from NADH, via FMN and iron-sulfur (Fe-S) centers, to quinones in the respiratory chain. The immediate electron acceptor for the enzyme in this species is believed to be ubiquinone. Couples the redox reaction to proton translocation (for every two electrons transferred, four hydrogen ions are translocated across the cytoplasmic membrane), and thus conserves the redox energy in a proton gradient. The sequence is that of NADH-quinone oxidoreductase subunit B from Methylocella silvestris (strain DSM 15510 / CIP 108128 / LMG 27833 / NCIMB 13906 / BL2).